Consider the following 732-residue polypeptide: Catalase-peroxidase (732 aa).

The disordered stretch occupies residues 1-23 (MSEQSRCPVTGRTADSPATGSGL). Positions 97 to 220 (WHSAGTYRTS…LAAVQMGLIY (124 aa)) form a cross-link, tryptophyl-tyrosyl-methioninium (Trp-Tyr) (with M-246). Histidine 98 acts as the Proton acceptor in catalysis. The tryptophyl-tyrosyl-methioninium (Tyr-Met) (with W-97) cross-link spans 220–246 (YVNPEGPDGKPDPVAAGRDIRETFARM). A heme b-binding site is contributed by histidine 261.

This sequence belongs to the peroxidase family. Peroxidase/catalase subfamily. As to quaternary structure, homodimer or homotetramer. Requires heme b as cofactor. In terms of processing, formation of the three residue Trp-Tyr-Met cross-link is important for the catalase, but not the peroxidase activity of the enzyme.

It catalyses the reaction H2O2 + AH2 = A + 2 H2O. The enzyme catalyses 2 H2O2 = O2 + 2 H2O. Its function is as follows. Bifunctional enzyme with both catalase and broad-spectrum peroxidase activity. The chain is Catalase-peroxidase from Prosthecochloris aestuarii (strain DSM 271 / SK 413).